Consider the following 689-residue polypeptide: Glycine--tRNA ligase beta subunit (689 aa).

It belongs to the class-II aminoacyl-tRNA synthetase family. Tetramer of two alpha and two beta subunits.

It is found in the cytoplasm. It catalyses the reaction tRNA(Gly) + glycine + ATP = glycyl-tRNA(Gly) + AMP + diphosphate. The chain is Glycine--tRNA ligase beta subunit from Shigella boydii serotype 18 (strain CDC 3083-94 / BS512).